The following is a 71-amino-acid chain: Gas vesicle protein A (71 aa).

Belongs to the gas vesicle GvpA family. The gas vesicle shell is 2 nm thick and consists of a single layer of this protein. It forms helical ribs nearly perpendicular to the long axis of the vesicle.

The protein localises to the gas vesicle shell. In terms of biological role, gas vesicles are hollow, gas filled proteinaceous nanostructures found in some microorganisms. During planktonic growth they allow positioning of the organism at a favorable depth for light or nutrient acquisition. GvpA forms the protein shell. Cluster expression in E.coli (gvpA1-gvpA2-gvpC-gvpN-gvpJ-gvpK-gvpF-gvpG-gvpV-gvpW) allows cells to float and produces irregularly shaped gas vesicles. This Nostoc sp. (strain PCC 7120 / SAG 25.82 / UTEX 2576) protein is Gas vesicle protein A.